The primary structure comprises 308 residues: Urease accessory protein UreD (308 aa).

The protein belongs to the UreD family. As to quaternary structure, ureD, UreF and UreG form a complex that acts as a GTP-hydrolysis-dependent molecular chaperone, activating the urease apoprotein by helping to assemble the nickel containing metallocenter of UreC. The UreE protein probably delivers the nickel.

It localises to the cytoplasm. Its function is as follows. Required for maturation of urease via the functional incorporation of the urease nickel metallocenter. The protein is Urease accessory protein UreD of Psychromonas ingrahamii (strain DSM 17664 / CCUG 51855 / 37).